The following is a 483-amino-acid chain: Glutamyl-tRNA(Gln) amidotransferase subunit A (483 aa).

Catalysis depends on charge relay system residues Lys-76 and Ser-151. The active-site Acyl-ester intermediate is the Ser-175.

The protein belongs to the amidase family. GatA subfamily. As to quaternary structure, heterotrimer of A, B and C subunits.

The enzyme catalyses L-glutamyl-tRNA(Gln) + L-glutamine + ATP + H2O = L-glutaminyl-tRNA(Gln) + L-glutamate + ADP + phosphate + H(+). In terms of biological role, allows the formation of correctly charged Gln-tRNA(Gln) through the transamidation of misacylated Glu-tRNA(Gln) in organisms which lack glutaminyl-tRNA synthetase. The reaction takes place in the presence of glutamine and ATP through an activated gamma-phospho-Glu-tRNA(Gln). This is Glutamyl-tRNA(Gln) amidotransferase subunit A from Pseudomonas savastanoi pv. phaseolicola (strain 1448A / Race 6) (Pseudomonas syringae pv. phaseolicola (strain 1448A / Race 6)).